Reading from the N-terminus, the 983-residue chain is Alanine--tRNA ligase, mitochondrial (983 aa).

A mitochondrion-targeting transit peptide spans 1–24; that stretch reads MTSTTGLRNLTLSFKKQLTTSTRT. Ser-504 is modified (phosphoserine). His-625, His-629, Cys-744, and His-748 together coordinate Zn(2+). Ser-975 bears the Phosphoserine mark.

It belongs to the class-II aminoacyl-tRNA synthetase family. In terms of assembly, monomer. It depends on Zn(2+) as a cofactor.

The protein localises to the cytoplasm. It is found in the mitochondrion. The enzyme catalyses tRNA(Ala) + L-alanine + ATP = L-alanyl-tRNA(Ala) + AMP + diphosphate. In terms of biological role, catalyzes the attachment of alanine to tRNA(Ala) in a two-step reaction: alanine is first activated by ATP to form Ala-AMP and then transferred to the acceptor end of tRNA(Ala). Also edits incorrectly charged tRNA(Ala) via its editing domain. The sequence is that of Alanine--tRNA ligase, mitochondrial from Saccharomyces cerevisiae (strain ATCC 204508 / S288c) (Baker's yeast).